The following is a 338-amino-acid chain: MPVVTLAVDAMGGDHGLSVTVPAVAAMLSRHEHMHIILVGQLEPLTSALSQANIADHPRITVQPATEVVAMDDPVAVALRQKKDSSMRVAINMVKEGRAQAAVSAGNTGALMAVSRFVLKTLPGVDRPAICTAIPTANGHCHMLDLGANVDSEPAHLLQFALMGQAVVRAVDGVEHPRVALLNIGEEDIKGNEQIKEAAGLLREAQGLNYVGFVEGNGIFSGEADVVVCDGFVGNVSLKTMEGVAKMIGNMLRQEIKQSWLRKLCGLFALPVLIGLKKRMDPDHYNGASLVGLRGVVVKSHGGTSKEGFACALEVAQLEARRNVPSLISDALGQPGTH.

The protein belongs to the PlsX family. As to quaternary structure, homodimer. Probably interacts with PlsY.

The protein resides in the cytoplasm. It catalyses the reaction a fatty acyl-[ACP] + phosphate = an acyl phosphate + holo-[ACP]. It participates in lipid metabolism; phospholipid metabolism. Functionally, catalyzes the reversible formation of acyl-phosphate (acyl-PO(4)) from acyl-[acyl-carrier-protein] (acyl-ACP). This enzyme utilizes acyl-ACP as fatty acyl donor, but not acyl-CoA. This chain is Phosphate acyltransferase, found in Alcanivorax borkumensis (strain ATCC 700651 / DSM 11573 / NCIMB 13689 / SK2).